We begin with the raw amino-acid sequence, 361 residues long: Queuine tRNA-ribosyltransferase (361 aa).

D92 serves as the catalytic Proton acceptor. Residues 92–96 (DSGGF), D146, Q189, and G216 contribute to the substrate site. Positions 247 to 253 (GVGKPAD) are RNA binding. Residue D266 is the Nucleophile of the active site. The segment at 271–275 (TRSGR) is RNA binding; important for wobble base 34 recognition. Zn(2+) contacts are provided by C304, C306, C309, and H335.

The protein belongs to the queuine tRNA-ribosyltransferase family. As to quaternary structure, homodimer. Within each dimer, one monomer is responsible for RNA recognition and catalysis, while the other monomer binds to the replacement base PreQ1. The cofactor is Zn(2+).

It carries out the reaction 7-aminomethyl-7-carbaguanine + guanosine(34) in tRNA = 7-aminomethyl-7-carbaguanosine(34) in tRNA + guanine. Its pathway is tRNA modification; tRNA-queuosine biosynthesis. In terms of biological role, catalyzes the base-exchange of a guanine (G) residue with the queuine precursor 7-aminomethyl-7-deazaguanine (PreQ1) at position 34 (anticodon wobble position) in tRNAs with GU(N) anticodons (tRNA-Asp, -Asn, -His and -Tyr). Catalysis occurs through a double-displacement mechanism. The nucleophile active site attacks the C1' of nucleotide 34 to detach the guanine base from the RNA, forming a covalent enzyme-RNA intermediate. The proton acceptor active site deprotonates the incoming PreQ1, allowing a nucleophilic attack on the C1' of the ribose to form the product. After dissociation, two additional enzymatic reactions on the tRNA convert PreQ1 to queuine (Q), resulting in the hypermodified nucleoside queuosine (7-(((4,5-cis-dihydroxy-2-cyclopenten-1-yl)amino)methyl)-7-deazaguanosine). This chain is Queuine tRNA-ribosyltransferase, found in Rickettsia typhi (strain ATCC VR-144 / Wilmington).